Here is a 616-residue protein sequence, read N- to C-terminus: FNIP repeat-containing protein DDB_G0290639 (616 aa).

Residues 239–274 (FENNNNNNNNNNNNNNNNNNNNNNNNNNNNNKKTEK) are a coiled coil. Low complexity predominate over residues 241-269 (NNNNNNNNNNNNNNNNNNNNNNNNNNNNN). The interval 241 to 270 (NNNNNNNNNNNNNNNNNNNNNNNNNNNNNK) is disordered. FNIP repeat units follow at residues 337–379 (FEES…FNDG), 380–421 (FNQS…KLCN), 423–464 (FSQP…VFYD), 466–508 (FNQL…FSDG), 509–550 (FNQT…LIDS), and 552–593 (FQQP…ILDK).

The chain is FNIP repeat-containing protein DDB_G0290639 from Dictyostelium discoideum (Social amoeba).